The sequence spans 1020 residues: Phosphatidylinositol 3-kinase VPS34 (1020 aa).

The 162-residue stretch at 49-210 (LSTKFEDPTV…NWLDKMVLPK (162 aa)) folds into the C2 PI3K-type domain. Residues 331–577 (DKELKPTPQL…DGPIKIYMDI (247 aa)) enclose the PIK helical domain. Positions 666–1004 (YPEESSVFKS…LINDSVNAFL (339 aa)) constitute a PI3K/PI4K catalytic domain. Residues 672-678 (VFKSSLA) form a G-loop region. The interval 873–881 (GVGDRHLDN) is catalytic loop. The activation loop stretch occupies residues 892-913 (HADFGYILGRDPKPFPPLMKLP).

Belongs to the PI3/PI4-kinase family. As to quaternary structure, component of the autophagy-specific VPS34 PI3-kinase complex I composed of at least VPS15, VPS30, VPS34, and of the VPS34 PI3-kinase complex II composed of VPS15, VPS30, VPS34 and VPS38. Interacts with VMNA7. In terms of processing, autophosphorylated.

The protein resides in the golgi apparatus. It is found in the trans-Golgi network membrane. It localises to the endosome membrane. It catalyses the reaction a 1,2-diacyl-sn-glycero-3-phospho-(1D-myo-inositol) + ATP = a 1,2-diacyl-sn-glycero-3-phospho-(1D-myo-inositol-3-phosphate) + ADP + H(+). Its function is as follows. Multifunctional phosphatidylinositol 3-kinase involved in acidification of vacuoles, pH-dependent cell growth, and autophagocytosis. Plays an important role in protein transport and virulence. Component of the autophagy-specific VPS34 PI3-kinase complex I essential to recruit the ATG8-phosphatidylinositol conjugate and the ATG12-ATG5 conjugate to the pre-autophagosomal structure. Also involved in endosome-to-Golgi retrograde transport as part of the VPS34 PI3-kinase complex II. This second complex is required for the endosome-to-Golgi retrieval of PEP1 and KEX2, and the recruitment of VPS5 and VPS7, two components of the retromer complex, to endosomal membranes (probably through the synthesis of a specific pool of phosphatidylinositol 3-phosphate recruiting the retromer to the endosomes). Finally, it might also be involved in ethanol tolerance and cell wall integrity. The sequence is that of Phosphatidylinositol 3-kinase VPS34 from Candida albicans (Yeast).